The following is a 121-amino-acid chain: Alpha-endosulfine (121 aa).

The disordered stretch occupies residues 1 to 53; it reads MSQKQEEENPAEETGEEKQDTQEKEGILPERAEEAKLKAKYPSLGQKPGGSDF. Residue Ser-2 is modified to N-acetylserine. Ser-2 is subject to Phosphoserine. Residues 16–37 show a composition bias toward basic and acidic residues; it reads EEKQDTQEKEGILPERAEEAKL. Phosphothreonine is present on Thr-21. Ser-43 carries the post-translational modification Phosphoserine. Ser-67 is modified (phosphoserine; by GWL). Residues 79 to 121 form a disordered region; the sequence is NKQLPSAGPDKNLVTGDHIPTPQDLPQRKSSLVTSKLAGGQVE. Ser-109 is modified (phosphoserine; by PKA).

It belongs to the endosulfine family. As to quaternary structure, interacts (when phosphorylated at Ser-67) with PPP2R2D. Interacts with ABCC8. Interacts with SNCA; interaction is disrupted when phosphorylated at Ser-109. Phosphorylation at Ser-67 by GWL during mitosis is essential for interaction with PPP2R2D (PR55-delta) and subsequent inactivation of PP2A. Phosphorylated by PKA. Widely expressed with high levels in skeletal muscle and brain and lower levels in the pancreas.

The protein localises to the cytoplasm. Protein phosphatase inhibitor that specifically inhibits protein phosphatase 2A (PP2A) during mitosis. When phosphorylated at Ser-67 during mitosis, specifically interacts with PPP2R2D (PR55-delta) and inhibits its activity, leading to inactivation of PP2A, an essential condition to keep cyclin-B1-CDK1 activity high during M phase. Also acts as a stimulator of insulin secretion by interacting with sulfonylurea receptor (ABCC8), thereby preventing sulfonylurea from binding to its receptor and reducing K(ATP) channel currents. The polypeptide is Alpha-endosulfine (ENSA) (Homo sapiens (Human)).